A 418-amino-acid polypeptide reads, in one-letter code: Glutamyl-tRNA reductase (418 aa).

Residues 49-52 (TCNR), S109, 114-116 (EPQ), and Q120 each bind substrate. Catalysis depends on C50, which acts as the Nucleophile. An NADP(+)-binding site is contributed by 189-194 (GAGETI).

The protein belongs to the glutamyl-tRNA reductase family. Homodimer.

The catalysed reaction is (S)-4-amino-5-oxopentanoate + tRNA(Glu) + NADP(+) = L-glutamyl-tRNA(Glu) + NADPH + H(+). Its pathway is porphyrin-containing compound metabolism; protoporphyrin-IX biosynthesis; 5-aminolevulinate from L-glutamyl-tRNA(Glu): step 1/2. Functionally, catalyzes the NADPH-dependent reduction of glutamyl-tRNA(Glu) to glutamate 1-semialdehyde (GSA). The protein is Glutamyl-tRNA reductase of Shigella dysenteriae serotype 1 (strain Sd197).